A 444-amino-acid polypeptide reads, in one-letter code: Glucarate dehydratase (444 aa).

Positions 30, 101, 148, and 203 each coordinate substrate. The active-site Proton acceptor is Lys205. Mg(2+) contacts are provided by Asp233, Glu264, and Asn287. 233 to 235 provides a ligand contact to substrate; sequence DPN. Substrate contacts are provided by residues Asn287, 337–339, His366, and Arg420; that span reads HSN. His337 serves as the catalytic Proton acceptor.

This sequence belongs to the mandelate racemase/muconate lactonizing enzyme family. GlucD subfamily. Mg(2+) is required as a cofactor.

It carries out the reaction D-glucarate = 5-dehydro-4-deoxy-D-glucarate + H2O. It participates in carbohydrate acid metabolism; D-glucarate degradation; 2,5-dioxopentanoate from D-glucarate: step 1/2. Its function is as follows. Catalyzes the dehydration of glucarate to 5-keto-4-deoxy-D-glucarate (5-kdGluc). This Acinetobacter baylyi (strain ATCC 33305 / BD413 / ADP1) protein is Glucarate dehydratase (gudD).